The sequence spans 257 residues: UPF0758 protein Bcenmc03_2526 (257 aa).

Residues 1-53 form a disordered region; the sequence is MLSPCPILPSAECRDTADTPADPPGRVIPINRRRRRPGDWRPERPRERLLERG. Positions 37–51 are enriched in basic and acidic residues; sequence PGDWRPERPRERLLE. The 123-residue stretch at 135–257 folds into the MPN domain; the sequence is QIDSPGAVED…TFSFARAGWL (123 aa). Zn(2+) contacts are provided by His206, His208, and Asp219. A JAMM motif motif is present at residues 206-219; the sequence is HNHPSGAVQPSAED.

It belongs to the UPF0758 family.

The chain is UPF0758 protein Bcenmc03_2526 from Burkholderia orbicola (strain MC0-3).